The following is a 285-amino-acid chain: Bis(5'-nucleosyl)-tetraphosphatase, symmetrical (285 aa).

The protein belongs to the Ap4A hydrolase family.

The catalysed reaction is P(1),P(4)-bis(5'-adenosyl) tetraphosphate + H2O = 2 ADP + 2 H(+). Its function is as follows. Hydrolyzes diadenosine 5',5'''-P1,P4-tetraphosphate to yield ADP. The chain is Bis(5'-nucleosyl)-tetraphosphatase, symmetrical from Pseudomonas entomophila (strain L48).